A 993-amino-acid polypeptide reads, in one-letter code: Glycine dehydrogenase (decarboxylating) (993 aa).

Residue K715 is modified to N6-(pyridoxal phosphate)lysine.

Belongs to the GcvP family. As to quaternary structure, the glycine cleavage system is composed of four proteins: P, T, L and H. Requires pyridoxal 5'-phosphate as cofactor.

The catalysed reaction is N(6)-[(R)-lipoyl]-L-lysyl-[glycine-cleavage complex H protein] + glycine + H(+) = N(6)-[(R)-S(8)-aminomethyldihydrolipoyl]-L-lysyl-[glycine-cleavage complex H protein] + CO2. Functionally, the glycine cleavage system catalyzes the degradation of glycine. The P protein binds the alpha-amino group of glycine through its pyridoxal phosphate cofactor; CO(2) is released and the remaining methylamine moiety is then transferred to the lipoamide cofactor of the H protein. The protein is Glycine dehydrogenase (decarboxylating) of Xylella fastidiosa (strain Temecula1 / ATCC 700964).